A 252-amino-acid polypeptide reads, in one-letter code: NAC domain-containing protein 23 (252 aa).

Residues 12–177 (MPPGFRFQPT…EMVLCRISNK (166 aa)) enclose the NAC domain. Residues 110–183 (TAVKRRFVFY…ISNKDLPKPP (74 aa)) mediate DNA binding. The segment at 225 to 252 (VDDAAAADDDPGDLDEEIDDSMQRNHGG) is disordered. Positions 229 to 244 (AAADDDPGDLDEEIDD) are enriched in acidic residues.

As to quaternary structure, forms heterodimers with NAC26. As to expression, expressed in stems and panicles. Expressed in developing seeds.

It localises to the nucleus. The protein localises to the cytoplasm. In terms of biological role, transcription factor involved in the regulation of seed size. Possesses transactivation activity in yeast. The chain is NAC domain-containing protein 23 from Oryza sativa subsp. indica (Rice).